A 523-amino-acid chain; its full sequence is Glutamate--cysteine ligase (523 aa).

The protein belongs to the glutamate--cysteine ligase type 1 family. Type 1 subfamily.

The enzyme catalyses L-cysteine + L-glutamate + ATP = gamma-L-glutamyl-L-cysteine + ADP + phosphate + H(+). It participates in sulfur metabolism; glutathione biosynthesis; glutathione from L-cysteine and L-glutamate: step 1/2. In Baumannia cicadellinicola subsp. Homalodisca coagulata, this protein is Glutamate--cysteine ligase.